Here is a 212-residue protein sequence, read N- to C-terminus: Thymidylate kinase (212 aa).

13-20 (GLEGAGKS) contributes to the ATP binding site.

It belongs to the thymidylate kinase family.

The enzyme catalyses dTMP + ATP = dTDP + ADP. Its function is as follows. Phosphorylation of dTMP to form dTDP in both de novo and salvage pathways of dTTP synthesis. The protein is Thymidylate kinase of Legionella pneumophila (strain Corby).